A 428-amino-acid chain; its full sequence is Enolase (428 aa).

Residue glutamine 163 participates in (2R)-2-phosphoglycerate binding. Glutamate 205 acts as the Proton donor in catalysis. The Mg(2+) site is built by aspartate 242, glutamate 285, and aspartate 312. 4 residues coordinate (2R)-2-phosphoglycerate: lysine 337, arginine 366, serine 367, and lysine 388. Residue lysine 337 is the Proton acceptor of the active site.

The protein belongs to the enolase family. It depends on Mg(2+) as a cofactor.

It is found in the cytoplasm. It localises to the secreted. The protein resides in the cell surface. The catalysed reaction is (2R)-2-phosphoglycerate = phosphoenolpyruvate + H2O. The protein operates within carbohydrate degradation; glycolysis; pyruvate from D-glyceraldehyde 3-phosphate: step 4/5. Functionally, catalyzes the reversible conversion of 2-phosphoglycerate (2-PG) into phosphoenolpyruvate (PEP). It is essential for the degradation of carbohydrates via glycolysis. The sequence is that of Enolase from Neisseria gonorrhoeae (strain ATCC 700825 / FA 1090).